A 151-amino-acid polypeptide reads, in one-letter code: 3-hydroxyacyl-[acyl-carrier-protein] dehydratase FabZ (151 aa).

Residue His49 is part of the active site.

Belongs to the thioester dehydratase family. FabZ subfamily.

It localises to the cytoplasm. The catalysed reaction is a (3R)-hydroxyacyl-[ACP] = a (2E)-enoyl-[ACP] + H2O. Involved in unsaturated fatty acids biosynthesis. Catalyzes the dehydration of short chain beta-hydroxyacyl-ACPs and long chain saturated and unsaturated beta-hydroxyacyl-ACPs. The polypeptide is 3-hydroxyacyl-[acyl-carrier-protein] dehydratase FabZ (Bordetella bronchiseptica (strain ATCC BAA-588 / NCTC 13252 / RB50) (Alcaligenes bronchisepticus)).